We begin with the raw amino-acid sequence, 716 residues long: MANHAKLVDQEIYRSPVDDFELNYQEYLNDDDDDKQEAPVAVSKAPKGKGSNHGLGCRMKGLFDGFGGTDLKTIMRHLRRRRPKSGQALTNFMLSGNMEKVVDQHVKDFVHHFGRINPENGRIMGALRGNDFFNFGGLHNNLGNTGKVYLDNLMKGKCGKKRKVHKFKPIVVEELDFGAPKPAVPATPKAPVAPVAPVIPAPAVTPQKPKVDEPTYADSVSDFGLDFETEREKCLRNKTLFEDPEFPATAASLYYRTPPRDRIIWKRPGEIIANPQLITQGESRFDVKQGALGDCWFLAALANITLYDALFYRIVPPNQSFTENYAGIFHFQFWHYGKWVDVVVDDRLPTVNNQLYYLHSADNTEFWSALVEKAYAKLHGGYENLDGGTTAEALEDFTGGLTEYFDLRKSEKAAVLAALVKGMEMGSLFGCSIDADANIKEAQLRNGLVCGHAYSITAIHSITYYGEDTTLLRLRNPWGNEKEWNGAWSDGSSEWSKIDEATKKQIDVQFARDGEFWMSFEDFFSNFTQMEVCNLTAEIFDEIAEMTGVNRATETVEEEHQWHEIMEDGEWSSKKGTAGGCNNNPSTYPKNPQFSTFFTAPQSSIEADGNVTVIVAVLQKYRRELRSKGKDVLPIGVSIYSLGAEGTARSPLTAQFFSQNRPIARTTVFVNTREVTVRFRVPPGQYVIVPCTFDAYDDAEFLLRVYANGTLKSSLL.

Residues 31–53 are disordered; it reads DDDDKQEAPVAVSKAPKGKGSNH. Residues 240–536 enclose the Calpain catalytic domain; sequence LFEDPEFPAT…FTQMEVCNLT (297 aa). Catalysis depends on residues Cys-295, His-452, and Asn-476.

The protein belongs to the peptidase C2 family.

Its function is as follows. Calcium-regulated non-lysosomal thiol-protease which catalyzes limited proteolysis of substrates. Promotes starvation-induced muscle atrophy. In Caenorhabditis elegans, this protein is Calpain clp-4.